Reading from the N-terminus, the 472-residue chain is MSNIYIQEPPTNGKVLLKTTAGDIDIELWSKEAPKACRNFIQLCLEAYYDNTIFHRVVPGFIVQGGDPTGTGSGGESIYGAPFKDEFHSRLRFNRRGLVAMANAGSHDNGSQFFFTLGRADELNNKHTIFGKVTGDTVYNMLRLSEVDIDDDERPHNPHKIKSCEVLFNPFDDIIPREIKRLKKEKPEEEVKKLKPKGTKNFSLLSFGEEAEEEEEEVNRVSQSMKGKSKSSHDLLKDDPHLSSVPVVESEKGDAPDLVDDGEDESAEHDEYIDGDEKNLMRERIAKKLKKDTSANVKSAGEGEVEKKSVSRSEELRKEARQLKRELLAAKQKKVENAAKQAEKRSEEEEAPPDGAVAEYRREKQKYEALRKQQSKKGTSREDQTLALLNQFKSKLTQAIAETPENDIPETEVEDDEGWMSHVLQFEDKSRKVKDASMQDSDTFEIYDPRNPVNKRRREESKKLMREKKERR.

At Ser-2 the chain carries N-acetylserine. A PPIase cyclophilin-type domain is found at 11-166 (TNGKVLLKTT…NPHKIKSCEV (156 aa)). N-linked (GlcNAc...) asparagine glycans are attached at residues Asn-109 and Asn-201. The stretch at 206 to 230 (SFGEEAEEEEEEVNRVSQSMKGKSK) forms a coiled coil. Disordered stretches follow at residues 206–386 (SFGE…DQTL) and 398–472 (QAIA…KERR). Positions 231–241 (SSHDLLKDDPH) are enriched in basic and acidic residues. Acidic residues predominate over residues 257–268 (DLVDDGEDESAE). 3 stretches are compositionally biased toward basic and acidic residues: residues 269–286 (HDEYIDGDEKNLMRERIA), 304–347 (EVEK…KRSE), and 359–371 (EYRREKQKYEALR). Residues 306–377 (EKKSVSRSEE…EALRKQQSKK (72 aa)) adopt a coiled-coil conformation. Residue Ser-346 is modified to Phosphoserine. Positions 404–418 (PENDIPETEVEDDEG) are enriched in acidic residues. Basic and acidic residues-rich tracts occupy residues 425-437 (QFEDKSRKVKDAS) and 457-472 (RREESKKLMREKKERR).

Belongs to the cyclophilin-type PPIase family. In terms of assembly, part of the activated spliceosome B/catalytic step 1 spliceosome, one of the forms of the spliceosome which has a well-formed active site but still cannot catalyze the branching reaction and is composed at least of 52 proteins, the U2, U5 and U6 snRNAs and the pre-mRNA. Recruited during early steps of activated spliceosome B maturation, it is probably one of the first proteins released from this complex as he matures to the spliceosome C complex. Component of the minor spliceosome, which splices U12-type introns.

The protein resides in the nucleus. Its function is as follows. As part of the spliceosome, plays a role in pre-mRNA splicing. Probable inactive PPIase with no peptidyl-prolyl cis-trans isomerase activity. As a component of the minor spliceosome, involved in the splicing of U12-type introns in pre-mRNAs. The sequence is that of Spliceosome-associated protein CWC27 homolog from Homo sapiens (Human).